A 291-amino-acid chain; its full sequence is MLKPTWLRVKAPQKERIGTINRLLTDLKLNTVCEEASCPNIGECFAGGTATFLIMGPGCTRACPYCDIDFDKSIRTVDHTEPTRIGEAVSRMRLKHVVITSVNRDDLADGGASHFVACIAAVRAASPTTTIEVLIPDFCGNLNSIDKVLAAKPEIINHNIETVPRIYNRVRPQGVYQRSLYLLDWIKSNDKNLYTKSGLMVGLGEIDAEVLEVMADLRAIQVDVVTIGQYLSPGSKHLPIDRFVTPTQFDNYKAIGELEMNFLQVVSTPLTRSSYHSGEFRNLMRDNPRQN.

Positions 33, 38, 44, 59, 63, 66, and 274 each coordinate [4Fe-4S] cluster. Positions 45 to 263 (FAGGTATFLI…AIGELEMNFL (219 aa)) constitute a Radical SAM core domain.

This sequence belongs to the radical SAM superfamily. Lipoyl synthase family. [4Fe-4S] cluster is required as a cofactor.

The protein resides in the plastid. It localises to the organellar chromatophore. It catalyses the reaction [[Fe-S] cluster scaffold protein carrying a second [4Fe-4S](2+) cluster] + N(6)-octanoyl-L-lysyl-[protein] + 2 oxidized [2Fe-2S]-[ferredoxin] + 2 S-adenosyl-L-methionine + 4 H(+) = [[Fe-S] cluster scaffold protein] + N(6)-[(R)-dihydrolipoyl]-L-lysyl-[protein] + 4 Fe(3+) + 2 hydrogen sulfide + 2 5'-deoxyadenosine + 2 L-methionine + 2 reduced [2Fe-2S]-[ferredoxin]. Its pathway is protein modification; protein lipoylation via endogenous pathway; protein N(6)-(lipoyl)lysine from octanoyl-[acyl-carrier-protein]: step 2/2. Its function is as follows. Catalyzes the radical-mediated insertion of two sulfur atoms into the C-6 and C-8 positions of the octanoyl moiety bound to the lipoyl domains of lipoate-dependent enzymes, thereby converting the octanoylated domains into lipoylated derivatives. This chain is Lipoyl synthase, organellar chromatophore, found in Paulinella chromatophora.